A 68-amino-acid polypeptide reads, in one-letter code: Large ribosomal subunit protein bL35 (68 aa).

Belongs to the bacterial ribosomal protein bL35 family.

This Rickettsia canadensis (strain McKiel) protein is Large ribosomal subunit protein bL35.